We begin with the raw amino-acid sequence, 49 residues long: uncharacterized protein (49 aa).

The chain crosses the membrane as a helical span at residues 16 to 36 (WTCHTGFYLMILLVLFFMYGF).

Its subcellular location is the cell membrane. This is an uncharacterized protein from Bacillus subtilis (strain 168).